Here is a 758-residue protein sequence, read N- to C-terminus: Protein hunchback (758 aa).

Disordered regions lie at residues 30–51 and 172–214; these read EPGHHLDGNSVASSPRQSPIPS and EKLQ…EDMK. The segment covering 39 to 51 has biased composition (polar residues); that stretch reads SVASSPRQSPIPS. Phosphothreonine is present on Thr-178. A phosphoserine mark is found at Ser-188, Ser-207, Ser-209, and Ser-210. Positions 198–214 are enriched in basic and acidic residues; it reads EPEKEHDQMSNSSEDMK. 4 C2H2-type zinc fingers span residues 240-262, 269-291, 297-319, and 325-349; these read YKCKTCGVVAITKVDFWAHTRTH, LQCPKCPFVTEFKHHLEYHIRKH, FQCDKCSYTCVNKSMLNSHRKSH, and YRCADCDYATKYCHSFKLHLRKYGH. 2 disordered regions span residues 365-416 and 513-536; these read LVID…PVAT and QLQQQNQQQSDNEEEEQDDEYERK. 2 stretches are compositionally biased toward low complexity: residues 398 to 415 and 513 to 522; these read VAAVAPQQQQSQPAQPVA and QLQQQNQQQS. Acidic residues predominate over residues 523–532; that stretch reads DNEEEEQDDE. Phosphoserine is present on residues Ser-537 and Ser-540. The tract at residues 603-695 is disordered; sequence MTSPEQLKVP…TTSAVAAPPS (93 aa). Over residues 652 to 695 the composition is skewed to low complexity; the sequence is ANTSASSTASSSGNSSNASSNSNGNSSSNSSSNGTTSAVAAPPS. C2H2-type zinc fingers lie at residues 705–727 and 733–757; these read YECKYCDIFFKDAVLYTIHMGYH and FKCNMCGEKCDGPVGLFVHMARNAH.

It belongs to the hunchback C2H2-type zinc-finger protein family. In terms of tissue distribution, in embryo, expression of maternal transcript is highest in anterior region. Zygotic transcript is expressed in anterior region until the beginning of gastrulation and in posterior region until early gastrulation. After this, it is expressed in developing nervous system.

It is found in the nucleus. Its function is as follows. Gap class segmentation protein that controls development of head structures. The chain is Protein hunchback from Drosophila melanogaster (Fruit fly).